The sequence spans 326 residues: F-box/LRR-repeat protein 12 (326 aa).

The region spanning 1–47 (MATFADLPDSVLLEIFSYLPVRDRIRISRVCHHWKKLVDDRWLWRHV) is the F-box domain. 7 LRR repeats span residues 51-78 (LYTM…RMGG), 86-111 (APQL…CLHV), 161-185 (VPAF…VLGG), 186-211 (TYRV…EVLG), 212-236 (CTLS…IRLT), 237-261 (VRGL…CLLG), and 266-291 (PEMP…ELQG).

Interacts with SKP1 and CUL1.

It functions in the pathway protein modification; protein ubiquitination. Substrate-recognition component of the SCF (SKP1-CUL1-F-box protein)-type E3 ubiquitin ligase complex. Mediates the polyubiquitination and proteasomal degradation of CAMK1 leading to disruption of cyclin D1/CDK4 complex assembly which results in G1 cell cycle arrest in lung epithelia. This is F-box/LRR-repeat protein 12 (FBXL12) from Bos taurus (Bovine).